The primary structure comprises 400 residues: Haptoglobin (400 aa).

The N-terminal stretch at 1–18 is a signal peptide; it reads MSALPVVVTLLLCGQLLA. 2 consecutive Sushi domains span residues 28–83 and 84–141; these read DSCP…ECED and ASCP…ECEA. Cystine bridges form between cysteine 49/cysteine 81, cysteine 105/cysteine 139, and cysteine 143/cysteine 260. The Peptidase S1 domain occupies 156–398; that stretch reads IIGGSLDAKG…ILDWVRKTIA (243 aa). N-linked (GlcNAc...) asparagine glycans are attached at residues asparagine 285, asparagine 309, and asparagine 315. 2 cysteine pairs are disulfide-bonded: cysteine 303–cysteine 334 and cysteine 345–cysteine 375. Residues 312 to 317 form an interaction with CD163 region; it reads VPENKT.

It belongs to the peptidase S1 family. In terms of assembly, tetramer of two alpha and two beta chains; disulfide-linked. The hemoglobin/haptoglobin complex is composed of a haptoglobin dimer bound to two hemoglobin alpha-beta dimers. Interacts with CD163. Interacts with ERGIC3. As to expression, expressed by the liver and secreted in plasma.

The protein localises to the secreted. The protein resides in the extracellular space. Functionally, as a result of hemolysis, hemoglobin is found to accumulate in the kidney and is secreted in the urine. Haptoglobin captures, and combines with free plasma hemoglobin to allow hepatic recycling of heme iron and to prevent kidney damage. Haptoglobin also acts as an antioxidant, has antibacterial activity and plays a role in modulating many aspects of the acute phase response. Hemoglobin/haptoglobin complexes are rapidly cleared by the macrophage CD163 scavenger receptor expressed on the surface of liver Kupfer cells through an endocytic lysosomal degradation pathway. This chain is Haptoglobin (HP), found in Cervus elaphus (Red deer).